The following is a 99-amino-acid chain: Large ribosomal subunit protein bL28 (99 aa).

This sequence belongs to the bacterial ribosomal protein bL28 family.

In Rhizobium leguminosarum bv. trifolii (strain WSM2304), this protein is Large ribosomal subunit protein bL28.